A 254-amino-acid polypeptide reads, in one-letter code: uncharacterized protein (254 aa).

The active-site Acyl-thioester intermediate is Cys-71. Active-site residues include His-110 and Asp-125.

This sequence belongs to the arylamine N-acetyltransferase family.

This is an uncharacterized protein from Bacillus subtilis (strain 168).